We begin with the raw amino-acid sequence, 433 residues long: O-methyltransferase VdtC (433 aa).

Asp284 is a binding site for S-adenosyl-L-methionine. The Proton acceptor role is filled by His335.

The protein belongs to the class I-like SAM-binding methyltransferase superfamily. Cation-independent O-methyltransferase family. COMT subfamily.

It carries out the reaction 7,9,10-trihydroxy-3-(2-oxopropyl)-1H-benzo[g]isochromen-1-one + S-adenosyl-L-methionine = 9,10-dihydroxy-7-methoxy-3-(2-oxopropyl)-1H-benzo[g]isochromen-1-one + S-adenosyl-L-homocysteine + H(+). It participates in secondary metabolite biosynthesis. Functionally, O-methyltransferase; part of the gene cluster that mediates the biosynthesis of viriditoxin, one of the 'classical' secondary metabolites produced by fungi and that has antibacterial activity. The first step is performed by the polyketide synthase VdtA which condenses one acetyl-CoA and 6 malonyl-CoA units to form the heptaketide monomer backbone of viriditoxin. The product of VdtA is then O-methylated on C7 by the O-methyltransferase VdtC. The O-methyl group is important for the stereoselective coupling of the monomers at the final step of viriditoxin biosynthesis. The short-chain dehydrogenase/reductase VdtF then acts as a stereospecific reductase converting the pyrone to dihydropyrone via the reduction of the C3-C4 double bond. The FAD-binding monooxygenase VdtE then converts the ketone group into a methyl-ester group to yield semi-viriditoxin. Finally, the laccase VdtB is involved in dimerization of 2 semi-viriditoxin molecules to yield the final viriditoxin. VdtB is responsible for the regioselective 6,6'-coupling of semi-viriditoxin, which yields (M)-viriditoxin and (P)-viriditoxin at a ratio of 1:2. The non-catalytic carboxylesterase-like protein VdtD affects the stereochemistical outcome of the coupling. The highly reducing polyketide synthase VdtX is not involved in viriditoxin synthesis, but might possibly play a role in the production of additional metabolites not identified yet. The chain is O-methyltransferase VdtC from Byssochlamys spectabilis (Paecilomyces variotii).